Reading from the N-terminus, the 200-residue chain is Chromophore lyase CpcS/CpeS (200 aa).

Belongs to the CpcS/CpeS biliprotein lyase family.

In terms of biological role, covalently attaches a chromophore to Cys residue(s) of phycobiliproteins. This chain is Chromophore lyase CpcS/CpeS, found in Synechococcus sp. (strain WH8020).